Consider the following 473-residue polypeptide: Ral-GDS-related protein (473 aa).

The interval 117–215 is disordered; that stretch reads EPNEAKPDDP…NQPSEELPDM (99 aa). Positions 134 to 157 are enriched in low complexity; that stretch reads ALTMPALEPAPPLLADLGPALEPE. A compositionally biased stretch (pro residues) spans 173–185; it reads GPAPAPGEGPPPG. Residues 219–471 enclose the Ras-GEF domain; that stretch reads PPRLLAEQLT…YKLSCQLEPE (253 aa).

It is found in the cytoplasmic vesicle. In Homo sapiens (Human), this protein is Ral-GDS-related protein (RGL4).